A 27-amino-acid chain; its full sequence is Phospholipase A2 1 (27 aa).

Belongs to the phospholipase A2 family. Group I subfamily. Requires Ca(2+) as cofactor. In terms of tissue distribution, expressed by the venom gland.

It is found in the secreted. The catalysed reaction is a 1,2-diacyl-sn-glycero-3-phosphocholine + H2O = a 1-acyl-sn-glycero-3-phosphocholine + a fatty acid + H(+). Its function is as follows. Snake venom phospholipase A2 (PLA2) that inhibits neuromuscular transmission by blocking acetylcholine release from the nerve termini. PLA2 catalyzes the calcium-dependent hydrolysis of the 2-acyl groups in 3-sn-phosphoglycerides. The polypeptide is Phospholipase A2 1 (Micrurus nigrocinctus (Central American coral snake)).